Reading from the N-terminus, the 654-residue chain is Sphingosine kinase 2 (654 aa).

Positions Met1–Gln17 are enriched in basic and acidic residues. Residues Met1–Arg28 are disordered. The required for binding to sulfatide and phosphoinositides and for membrane localizatione stretch occupies residues Met1–Asp175. Residues Arg122–Arg130 carry the Nuclear localization signal motif. One can recognise a DAGKc domain in the interval Pro178–Ser325. ATP contacts are provided by residues Asn188–Phe190 and Thr220–Asn224. Ser245–Gly248 is a substrate binding site. The Proton donor/acceptor role is filled by Asp247. ATP is bound by residues Glu252 and Gly277–Gly279. Asp344 serves as a coordination point for substrate. ATP is bound by residues Arg351 and Arg357. Phosphoserine; by MAPK is present on Ser387. 2 positions are modified to phosphoserine: Ser393 and Ser399. The interval Glu400–Gly509 is disordered. Residues Leu416–Leu425 carry the Nuclear export signal motif. Phosphoserine; by PKD is present on residues Ser419 and Ser421. Residues Asn447 to Gly461 show a composition bias toward gly residues. Low complexity predominate over residues Asp462–Leu482. At Ser477 the chain carries Phosphoserine. Position 614 is a phosphothreonine; by MAPK (Thr614). An ATP-binding site is contributed by Asp622–Glu624.

Interacts with histone H3. Interacts with HDAC1, HDAC2, MBD2 and SIN3A. Interacts with EEF1A1; the interaction enhances SPHK2 kinase activity. Interacts with PHB2. The cofactor is Mg(2+). In terms of processing, phosphorylated by PKD on Ser-419 and Ser-421 upon PMA treatment. Phosphorylation induces export from the nucleus to the cytoplasm. Phosphorylated by MAPK1 and MAPK2 at Ser-387 and Thr-614, phosphorylation is induced by agonists such as EGF and PMA and increases kinase activity. Post-translationally, cleaved by CASP1 in apoptotic cells. The truncated form is released from cells. In terms of tissue distribution, mainly expressed in adult kidney, liver, and brain. Expressed in cerebral cortex and hippocampus (at protein level). Isoform 1 is the predominant form expressed in most tissues.

It localises to the cytoplasm. The protein resides in the nucleus. Its subcellular location is the endoplasmic reticulum. It is found in the mitochondrion inner membrane. The protein localises to the lysosome membrane. The enzyme catalyses a sphingoid base + ATP = a sphingoid 1-phosphate + ADP + H(+). It catalyses the reaction sphing-4-enine + ATP = sphing-4-enine 1-phosphate + ADP + H(+). The catalysed reaction is sphinganine + ATP = sphinganine 1-phosphate + ADP + H(+). It carries out the reaction (4R)-hydroxysphinganine + ATP = (4R)-hydroxysphinganine 1-phosphate + ADP + H(+). With respect to regulation, inhibited by sulfatide. Kinase activity is increased by phosphorylation by MAPK2 upon PMA or EGF treatments. In terms of biological role, catalyzes the phosphorylation of sphingosine to form sphingosine-1-phosphate (SPP), a lipid mediator with both intra- and extracellular functions. Also acts on D-erythro-dihydrosphingosine, D-erythro-sphingosine and L-threo-dihydrosphingosine. Binds phosphoinositides. In contrast to prosurvival SPHK1, has a positive effect on intracellular ceramide levels, inhibits cells growth and enhances apoptosis. In mitochondria, is important for cytochrome-c oxidase assembly and mitochondrial respiration. The SPP produced in mitochondria binds PHB2 and modulates the regulation via PHB2 of complex IV assembly and respiration. In nucleus, plays a role in epigenetic regulation of gene expression. Interacts with HDAC1 and HDAC2 and, through SPP production, inhibits their enzymatic activity, preventing the removal of acetyl groups from lysine residues with histones. Up-regulates acetylation of histone H3-K9, histone H4-K5 and histone H2B-K12. In nucleus, may have an inhibitory effect on DNA synthesis and cell cycle. In mast cells, is the main regulator of SPP production which mediates calcium influx, NF-kappa-B activation, cytokine production, such as TNF and IL6, and degranulation of mast cells. In dopaminergic neurons, is involved in promoting mitochondrial functions regulating ATP and ROS levels. Also involved in the regulation of glucose and lipid metabolism. The chain is Sphingosine kinase 2 from Homo sapiens (Human).